Reading from the N-terminus, the 115-residue chain is Large ribosomal subunit protein bL31B (115 aa).

This sequence belongs to the bacterial ribosomal protein bL31 family. Type B subfamily. Part of the 50S ribosomal subunit.

The sequence is that of Large ribosomal subunit protein bL31B from Polynucleobacter asymbioticus (strain DSM 18221 / CIP 109841 / QLW-P1DMWA-1) (Polynucleobacter necessarius subsp. asymbioticus).